We begin with the raw amino-acid sequence, 462 residues long: Cysteine--tRNA ligase (462 aa).

Cysteine 29 is a Zn(2+) binding site. The 'HIGH' region motif lies at 31-41 (PTVYNHAHIGN). 3 residues coordinate Zn(2+): cysteine 211, histidine 236, and glutamate 240. The 'KMSKS' region motif lies at 269-273 (KMSKS). Position 272 (lysine 272) interacts with ATP.

Belongs to the class-I aminoacyl-tRNA synthetase family. In terms of assembly, monomer. Zn(2+) serves as cofactor.

Its subcellular location is the cytoplasm. The enzyme catalyses tRNA(Cys) + L-cysteine + ATP = L-cysteinyl-tRNA(Cys) + AMP + diphosphate. The sequence is that of Cysteine--tRNA ligase from Caulobacter sp. (strain K31).